The chain runs to 273 residues: MRQIAIYGKGGIGKSTTTQNLTASLSTMGNKIMLVGCDPKADSTRMLLGGLNQKTVLDTLRSEGDEGVDLDVVMQRGFGDIKCVESGGPEPGVGCAGRGIITSIGLLENLGAYTDDLDYVFYDVLGDVVCGGFAMPIREGKAKEIYIVASGELMAIYAANNICKGLAKFAKGGARLGGIICNSRNVDGERELLDAFAKKLGSHLIHFIPRDNIVQRAEINRKTVIDFDPESNQAKEYLTLAHNVQNNDKLVVPTPLPMEELEAMMVEFGIVDL.

Residue 8 to 15 (GKGGIGKS) participates in ATP binding. Cys-95 contacts [4Fe-4S] cluster. Arg-98 carries the ADP-ribosylarginine; by dinitrogenase reductase ADP-ribosyltransferase modification. Cys-130 is a binding site for [4Fe-4S] cluster.

The protein belongs to the NifH/BchL/ChlL family. In terms of assembly, homodimer. [4Fe-4S] cluster is required as a cofactor. Post-translationally, the reversible ADP-ribosylation of Arg-98 inactivates the nitrogenase reductase and regulates nitrogenase activity.

It carries out the reaction N2 + 8 reduced [2Fe-2S]-[ferredoxin] + 16 ATP + 16 H2O = H2 + 8 oxidized [2Fe-2S]-[ferredoxin] + 2 NH4(+) + 16 ADP + 16 phosphate + 6 H(+). In terms of biological role, the key enzymatic reactions in nitrogen fixation are catalyzed by the nitrogenase complex, which has 2 components: the iron protein and the molybdenum-iron protein. This Methanosarcina barkeri protein is Nitrogenase iron protein 2 (nifH2).